Here is a 562-residue protein sequence, read N- to C-terminus: NAD-dependent malic enzyme (562 aa).

Tyr101 functions as the Proton donor in the catalytic mechanism. An NAD(+)-binding site is contributed by Arg154. Lys172 functions as the Proton acceptor in the catalytic mechanism. Residues Glu243, Asp244, and Asp267 each coordinate a divalent metal cation. 2 residues coordinate NAD(+): Asp267 and Asn415.

Belongs to the malic enzymes family. Homotetramer. The cofactor is Mg(2+). Mn(2+) is required as a cofactor.

The enzyme catalyses (S)-malate + NAD(+) = pyruvate + CO2 + NADH. The catalysed reaction is oxaloacetate + H(+) = pyruvate + CO2. The sequence is that of NAD-dependent malic enzyme from Shewanella denitrificans (strain OS217 / ATCC BAA-1090 / DSM 15013).